The primary structure comprises 530 residues: MKIFGLVIMSLLFVSLPITQQPEARDVPAYDRSEVTISPAETPESPPATPKTPVEKKHAEEINKYIWGLNYDKNSILVYQGEAVTNVPPKKGYKDGSEYIVVEKKKKGINQNNADISVINAISSLTYPGALVKANRELVENQPNVLPVKRDSLTLSVDLPGMTKKDNKIFVKNPTKSNVNNAVNTLVERWNDKYSKAYPNINAKIDYSDEMAYSESQLIAKFGTAFKAVNNSLNVNFEAISDGKVQEEVISFKQIYYNINVNEPTSPSKFFGGSVTKEQLDALGVNAENPPAYISSVAYGRQVYVKLSSSSHSNKVKTAFEAAMSGKSVKGDVELTNIIKNSSFKAVIYGGSAKEEVEIIDGNLGELRDILKKGSTYDRENPGVPISYTTNFLKDNDLAVVKNNSEYIETTSKSYTDGKINIDHSGGYVAQFNISWDEVSYDENGNEIKVHKKWGENYKSKLAHFTSSIYLPGNARNINIYARECTGLFWEWWRTVIDDRNLPLVKNRNVSIWGTTLYPRHSNNVDNPIQ.

Residues 1-25 (MKIFGLVIMSLLFVSLPITQQPEAR) form the signal peptide. Positions 36–55 (TISPAETPESPPATPKTPVE) are disordered. The next 4 membrane-spanning stretches (beta stranded) occupy residues 215-228 (ESQL…AFKA), 235-244 (VNFEAISDGK), 313-322 (SNKVKTAFEA), and 330-342 (KGDV…IKNS). A Conserved undecapeptide motif is present at residues 484–494 (ECTGLFWEWWR). Residues 516 to 517 (TL) carry the Cholesterol binding motif.

This sequence belongs to the cholesterol-dependent cytolysin family. As to quaternary structure, homooligomeric pore complex of 35 to 50 subunits; when inserted in the host membrane.

The protein localises to the secreted. The protein resides in the host cell membrane. In terms of biological role, a cholesterol-dependent toxin that causes cytolysis by forming pores in cholesterol containing host membranes. L.seeligeri is non-pathogenic, perhaps in part because this protein is about 25% as toxic as listeriolysin O. Mutating a single residue in the undecapeptide increases toxicity 2-fold. After binding to target membranes, the protein undergoes a major conformation change, leading to its insertion in the host membrane and formation of an oligomeric pore complex. Cholesterol is required for binding to host membranes, membrane insertion and pore formation; cholesterol binding is mediated by a Thr-Leu pair in the C-terminus. Can be reversibly inactivated by oxidation. The chain is Seeligeriolysin from Listeria seeligeri.